A 928-amino-acid chain; its full sequence is MKIKDTLNMGKTSFPMRAGLPKNEPIWQKKWDEDHVYEQRQKLNEGKPTFMLHDGPPFANGNIHMGHALNKISKDIIVRYKSMNGFRAPYVPGWDTHGLPIEQQLAKQGVKRKEMSMTDYRELCRQFAMQEIDKQRTDFKRLGVMGDWEHPYITLQHHYEASEIRVFGAMAKKGYIYHGLKPVYWSWSSESTLAEAEIEYHDDKSPSIYVAFKVVDGKGLLDTDTYLVIWTTTPWTIPANYGITVNPRFDYVQVQVGDKKYVVAAELLDRVAEEIGWENPKILKTFKGTDMDKMTAQHPLYDRTSLVMNADHVTLDAGTGLVHTAPGHGEDDYKVGVKYGLPVVSVVDAKGYMNEYAPGFEGVFYDDANKQITQALADKGALLKLDFFTHSYPHDWRTKKPVIFRATTQWFASIDAFRDQILKAIDTVDFKPSWGKTRLYNMIRDRGDWVISRQRAWGVPLPIFYAEDGEPIIEEETINHVADLFGKYGSNVWFEREAKDLLPEGYTNPHSPNGQFTKEKDIMDVWFDSGSSHQAVLAARPELSFPADLYLEGSDQYRGWFNSSLITSVAATGVAPYRGILSQGFTLDGKGRKMSKSLGNTIVPATIEKQFGAEIIRLWVATVDSSSDVRVSVDNFAQTSEAYRKIRNTMRFMVANTGDFDPEKDTVAYDELGSVDRYMMVRLNQIIKQVKTAYDAYDFATVEKTISSFLVNDLSAFYLDVAKDVVYIEAKDDPKRRGMQTVMFAALLTVTKLITPILPHTAEEVWPYLKQPEAYAALADMPEAEQFDDESQLLDIWSGFMDFRSEVQKALELARDNKVIGKSLEAAVTVYPSEPVRDMLDDVDANVMQLLITSHFEIAPATTKAPADAEQFDDMAVVVKHADGEVCPRCRMVRTDIGTDPKLPQLCSRCAAIVEANFPDAVTNGFDK.

Positions 57–67 (PFANGNIHMGH) match the 'HIGH' region motif. Glu552 is a binding site for L-isoleucyl-5'-AMP. The 'KMSKS' region signature appears at 593–597 (KMSKS). Residue Lys596 coordinates ATP. Zn(2+)-binding residues include Cys887, Cys890, Cys907, and Cys910.

It belongs to the class-I aminoacyl-tRNA synthetase family. IleS type 1 subfamily. As to quaternary structure, monomer. It depends on Zn(2+) as a cofactor.

It localises to the cytoplasm. It catalyses the reaction tRNA(Ile) + L-isoleucine + ATP = L-isoleucyl-tRNA(Ile) + AMP + diphosphate. Its function is as follows. Catalyzes the attachment of isoleucine to tRNA(Ile). As IleRS can inadvertently accommodate and process structurally similar amino acids such as valine, to avoid such errors it has two additional distinct tRNA(Ile)-dependent editing activities. One activity is designated as 'pretransfer' editing and involves the hydrolysis of activated Val-AMP. The other activity is designated 'posttransfer' editing and involves deacylation of mischarged Val-tRNA(Ile). The sequence is that of Isoleucine--tRNA ligase from Lacticaseibacillus casei (strain BL23) (Lactobacillus casei).